Consider the following 831-residue polypeptide: Periplasmic nitrate reductase (831 aa).

Positions 1-35 (MTISDSRRTFLKASAAAATASAAGIPLANGTAAEA) form a signal peptide, tat-type signal. A 4Fe-4S Mo/W bis-MGD-type domain is found at 42–98 (IRWDKAACRFCGTGCSVLVGTKEGRVVATQGDPDAPVNRGLNCIKGYFLSKIMYGED). [4Fe-4S] cluster contacts are provided by cysteine 49, cysteine 52, cysteine 56, and cysteine 84. Mo-bis(molybdopterin guanine dinucleotide)-binding positions include lysine 86, glutamine 153, asparagine 178, cysteine 182, 215 to 222 (WGSNMAEM), 246 to 250 (STYEH), 265 to 267 (QTD), methionine 375, glutamine 379, asparagine 485, 511 to 512 (SD), lysine 534, aspartate 561, and 721 to 730 (TGRVLEHWHS). Position 797 (tryptophan 797) interacts with substrate. Residues asparagine 805 and lysine 822 each coordinate Mo-bis(molybdopterin guanine dinucleotide).

It belongs to the prokaryotic molybdopterin-containing oxidoreductase family. NasA/NapA/NarB subfamily. Component of the periplasmic nitrate reductase NapAB complex composed of NapA and NapB. Requires [4Fe-4S] cluster as cofactor. Mo-bis(molybdopterin guanine dinucleotide) serves as cofactor. Predicted to be exported by the Tat system. The position of the signal peptide cleavage has not been experimentally proven.

The protein localises to the periplasm. The enzyme catalyses 2 Fe(II)-[cytochrome] + nitrate + 2 H(+) = 2 Fe(III)-[cytochrome] + nitrite + H2O. Catalytic subunit of the periplasmic nitrate reductase complex NapAB. Receives electrons from NapB and catalyzes the reduction of nitrate to nitrite. The protein is Periplasmic nitrate reductase of Dinoroseobacter shibae (strain DSM 16493 / NCIMB 14021 / DFL 12).